The primary structure comprises 137 residues: ATP synthase epsilon chain (137 aa).

Belongs to the ATPase epsilon chain family. F-type ATPases have 2 components, CF(1) - the catalytic core - and CF(0) - the membrane proton channel. CF(1) has five subunits: alpha(3), beta(3), gamma(1), delta(1), epsilon(1). CF(0) has three main subunits: a, b and c.

The protein localises to the cellular thylakoid membrane. Functionally, produces ATP from ADP in the presence of a proton gradient across the membrane. The sequence is that of ATP synthase epsilon chain from Trichormus variabilis (strain ATCC 29413 / PCC 7937) (Anabaena variabilis).